A 74-amino-acid polypeptide reads, in one-letter code: Antimicrobial peptide HsAp2 (74 aa).

Positions 1–21 (MSRRLILILVLVAMLVKTMAG) are cleaved as a signal peptide. The propeptide occupies 22 to 33 (MESKWVETTYEI). Position 65 is a proline amide (P65). Residues 69–74 (AISEQT) constitute a propeptide that is removed on maturation.

It belongs to the non-disulfide-bridged peptide (NDBP) superfamily. Medium-length antimicrobial peptide (group 3) family. In terms of tissue distribution, expressed by the venom gland.

Its subcellular location is the secreted. It localises to the target cell membrane. Possesses antimicrobial activity against both Gram-negative and Gram-positive bacteria, as well as against the fungus C.tropicalis. Also possesses a relatively high hemolytic activity. May act by disrupting the integrity of the bacterial cell membrane. This is Antimicrobial peptide HsAp2 from Heterometrus spinifer (Asia giant forest scorpion).